A 1109-amino-acid chain; its full sequence is DNA-directed RNA polymerase subunit beta (1109 aa).

Belongs to the RNA polymerase beta chain family. As to quaternary structure, in plastids the minimal PEP RNA polymerase catalytic core is composed of four subunits: alpha, beta, beta', and beta''. When a (nuclear-encoded) sigma factor is associated with the core the holoenzyme is formed, which can initiate transcription.

The protein resides in the plastid. It is found in the chloroplast. It catalyses the reaction RNA(n) + a ribonucleoside 5'-triphosphate = RNA(n+1) + diphosphate. Its function is as follows. DNA-dependent RNA polymerase catalyzes the transcription of DNA into RNA using the four ribonucleoside triphosphates as substrates. The sequence is that of DNA-directed RNA polymerase subunit beta from Nephroselmis olivacea (Green alga).